We begin with the raw amino-acid sequence, 635 residues long: Chaperone protein HtpG (635 aa).

The tract at residues Met1–Arg343 is a; substrate-binding. Residues Glu344–Arg560 are b. Residues Leu561–Asn635 form a c region.

Belongs to the heat shock protein 90 family. Homodimer.

The protein localises to the cytoplasm. Functionally, molecular chaperone. Has ATPase activity. The protein is Chaperone protein HtpG of Saccharophagus degradans (strain 2-40 / ATCC 43961 / DSM 17024).